A 255-amino-acid chain; its full sequence is Putative keratin-87 protein (255 aa).

One can recognise an IF rod domain in the interval 1 to 255 (MEANSGRLAS…SRGCVRALVL (255 aa)). Coiled-coil stretches lie at residues 19–81 (LEGY…EIRV) and 147–227 (LRRT…VMNS).

The protein belongs to the intermediate filament family. As to quaternary structure, heterotetramer of two type I and two type II keratins.

In Homo sapiens (Human), this protein is Putative keratin-87 protein (KRT87P).